Reading from the N-terminus, the 134-residue chain is Isocitrate dehydrogenase [NAD] subunit alpha, mitochondrial (134 aa).

Lysine 37 is modified (N6-succinyllysine). A Phosphothreonine modification is found at threonine 50. 3 residues coordinate substrate: arginine 64, arginine 74, and arginine 95.

The protein belongs to the isocitrate and isopropylmalate dehydrogenases family. In terms of assembly, heterooligomer of subunits alpha (IDH3A), beta (IDH3B), and gamma (IDH3G) in the apparent ratio of 2:1:1. The heterodimer containing one IDH3A and one IDH3B subunit and the heterodimer containing one IDH3A and one IDH3G subunit assemble into a heterotetramer (which contains two subunits of IDH3A, one of IDH3B and one of IDH3G) and further into the heterooctamer. Mg(2+) serves as cofactor. Requires Mn(2+) as cofactor.

It localises to the mitochondrion. The catalysed reaction is D-threo-isocitrate + NAD(+) = 2-oxoglutarate + CO2 + NADH. Its activity is regulated as follows. The heterotetramer and the heterodimer composed of IDH3A and IDH3G subunits can be allosterically activated by citrate (CIT) or/and ADP, and the two activators can act independently or synergistically. The heterodimer composed of IDH3A and IDH3B subunits cannot be allosterically regulated and the allosteric regulation of the heterotetramer is through the IDH3G subunit and not the IDH3B subunit. The IDH3G subunit contains the allosteric site which consists of a CIT-binding site and an ADP-binding site, and the binding of CIT and ADP causes conformational changes at the allosteric site which are transmitted to the active site in the catalytic subunit (IDH3A) through a cascade of conformational changes at the heterodimer interface, leading to stabilization of the isocitrate-binding at the active site and thus activation of the enzyme. ATP can activate the heterotetramer and the heterodimer composed of IDH3A and IDH3G subunits at low concentrations but inhibits their activities at high concentrations, whereas ATP exhibits only inhibitory effect on the heterodimer composed of IDH3A and IDH3B subunits. In terms of biological role, catalytic subunit of the enzyme which catalyzes the decarboxylation of isocitrate (ICT) into alpha-ketoglutarate. The heterodimer composed of the alpha (IDH3A) and beta (IDH3B) subunits and the heterodimer composed of the alpha (IDH3A) and gamma (IDH3G) subunits, have considerable basal activity but the full activity of the heterotetramer (containing two subunits of IDH3A, one of IDH3B and one of IDH3G) requires the assembly and cooperative function of both heterodimers. The chain is Isocitrate dehydrogenase [NAD] subunit alpha, mitochondrial from Mesocricetus auratus (Golden hamster).